We begin with the raw amino-acid sequence, 205 residues long: GTP cyclohydrolase-2 (205 aa).

Arginine 49 to glutamate 53 is a GTP binding site. The Zn(2+) site is built by cysteine 54, cysteine 65, and cysteine 67. GTP-binding positions include glutamine 70, glutamate 92–arginine 94, and threonine 114. Aspartate 126 (proton acceptor) is an active-site residue. Arginine 128 functions as the Nucleophile in the catalytic mechanism. Residues threonine 149 and lysine 154 each coordinate GTP.

The protein belongs to the GTP cyclohydrolase II family. Requires Zn(2+) as cofactor.

The catalysed reaction is GTP + 4 H2O = 2,5-diamino-6-hydroxy-4-(5-phosphoribosylamino)-pyrimidine + formate + 2 phosphate + 3 H(+). It functions in the pathway cofactor biosynthesis; riboflavin biosynthesis; 5-amino-6-(D-ribitylamino)uracil from GTP: step 1/4. Its function is as follows. Catalyzes the conversion of GTP to 2,5-diamino-6-ribosylamino-4(3H)-pyrimidinone 5'-phosphate (DARP), formate and pyrophosphate. This chain is GTP cyclohydrolase-2, found in Shewanella amazonensis (strain ATCC BAA-1098 / SB2B).